The chain runs to 345 residues: Succinylglutamate desuccinylase (345 aa).

The Zn(2+) site is built by His-64, Glu-67, and His-161. Residue Glu-225 is part of the active site.

Belongs to the AspA/AstE family. Succinylglutamate desuccinylase subfamily. Zn(2+) serves as cofactor.

The catalysed reaction is N-succinyl-L-glutamate + H2O = L-glutamate + succinate. It participates in amino-acid degradation; L-arginine degradation via AST pathway; L-glutamate and succinate from L-arginine: step 5/5. Its function is as follows. Transforms N(2)-succinylglutamate into succinate and glutamate. This Shewanella pealeana (strain ATCC 700345 / ANG-SQ1) protein is Succinylglutamate desuccinylase.